The sequence spans 63 residues: Large ribosomal subunit protein eL37 (63 aa).

Zn(2+) contacts are provided by Cys20, Cys23, Cys35, and Cys38. The C4-type zinc-finger motif lies at 20-38 (CRRCGRRAFNVKKGYCAAC).

It belongs to the eukaryotic ribosomal protein eL37 family. Zn(2+) serves as cofactor.

Functionally, binds to the 23S rRNA. In Thermococcus gammatolerans (strain DSM 15229 / JCM 11827 / EJ3), this protein is Large ribosomal subunit protein eL37.